Reading from the N-terminus, the 204-residue chain is High frequency lysogenization protein HflD homolog (204 aa).

Belongs to the HflD family.

It localises to the cytoplasm. The protein resides in the cell inner membrane. In Stenotrophomonas maltophilia (strain K279a), this protein is High frequency lysogenization protein HflD homolog.